Here is a 202-residue protein sequence, read N- to C-terminus: Dephospho-CoA kinase (202 aa).

Residues 6–202 form the DPCK domain; it reads KVSITGDLSS…EYFYALKGAL (197 aa). Residue 14 to 19 participates in ATP binding; that stretch reads SSGKTE.

Belongs to the CoaE family.

Its subcellular location is the cytoplasm. The enzyme catalyses 3'-dephospho-CoA + ATP = ADP + CoA + H(+). It participates in cofactor biosynthesis; coenzyme A biosynthesis; CoA from (R)-pantothenate: step 5/5. Catalyzes the phosphorylation of the 3'-hydroxyl group of dephosphocoenzyme A to form coenzyme A. This Chlamydia pneumoniae (Chlamydophila pneumoniae) protein is Dephospho-CoA kinase.